A 352-amino-acid polypeptide reads, in one-letter code: tRNA uridine(34) hydroxylase (352 aa).

One can recognise a Rhodanese domain in the interval Asp-146–Leu-240. Residue Cys-200 is the Cysteine persulfide intermediate of the active site. Positions Glu-315 to Gly-328 are enriched in basic and acidic residues. The segment at Glu-315–Glu-352 is disordered. Over residues Gly-342–Glu-352 the composition is skewed to polar residues.

This sequence belongs to the TrhO family.

The catalysed reaction is uridine(34) in tRNA + AH2 + O2 = 5-hydroxyuridine(34) in tRNA + A + H2O. Catalyzes oxygen-dependent 5-hydroxyuridine (ho5U) modification at position 34 in tRNAs. This is tRNA uridine(34) hydroxylase from Photorhabdus laumondii subsp. laumondii (strain DSM 15139 / CIP 105565 / TT01) (Photorhabdus luminescens subsp. laumondii).